The primary structure comprises 168 residues: ATP synthase F(1) complex subunit delta, mitochondrial (168 aa).

Residues Met-1–Tyr-22 constitute a mitochondrion transit peptide. N6-acetyllysine; alternate is present on residues Lys-136 and Lys-165. 2 positions are modified to N6-succinyllysine; alternate: Lys-136 and Lys-165.

It belongs to the ATPase epsilon chain family. In terms of assembly, component of the ATP synthase complex composed at least of ATP5F1A/subunit alpha, ATP5F1B/subunit beta, ATP5MC1/subunit c (homooctomer), MT-ATP6/subunit a, MT-ATP8/subunit 8, ATP5ME/subunit e, ATP5MF/subunit f, ATP5MG/subunit g, ATP5MK/subunit k, ATP5MJ/subunit j, ATP5F1C/subunit gamma, ATP5F1D/subunit delta, ATP5F1E/subunit epsilon, ATP5PF/subunit F6, ATP5PB/subunit b, ATP5PD/subunit d, ATP5PO/subunit OSCP. ATP synthase complex consists of a soluble F(1) head domain (subunits alpha(3) and beta(3)) - the catalytic core - and a membrane F(0) domain - the membrane proton channel (subunits c, a, 8, e, f, g, k and j). These two domains are linked by a central stalk (subunits gamma, delta, and epsilon) rotating inside the F1 region and a stationary peripheral stalk (subunits F6, b, d, and OSCP). Component of a complex composed at least by ATPIF1, ATP5F1A, ATP5F1B, ATP5F1C AND ATP5F1E.

It is found in the mitochondrion. The protein localises to the mitochondrion inner membrane. Functionally, subunit delta, of the mitochondrial membrane ATP synthase complex (F(1)F(0) ATP synthase or Complex V) that produces ATP from ADP in the presence of a proton gradient across the membrane which is generated by electron transport complexes of the respiratory chain. ATP synthase complex consist of a soluble F(1) head domain - the catalytic core - and a membrane F(1) domain - the membrane proton channel. These two domains are linked by a central stalk rotating inside the F(1) region and a stationary peripheral stalk. During catalysis, ATP synthesis in the catalytic domain of F(1) is coupled via a rotary mechanism of the central stalk subunits to proton translocation. In vivo, can only synthesize ATP although its ATP hydrolase activity can be activated artificially in vitro. With the central stalk subunit gamma, is essential for the biogenesis of F(1) catalytic part of the ATP synthase complex namely in the formation of F1 assembly intermediate. The chain is ATP synthase F(1) complex subunit delta, mitochondrial from Mus musculus (Mouse).